The following is a 216-amino-acid chain: Outer-membrane lipoprotein LolB (216 aa).

The N-terminal stretch at 1–24 (MNNLNYFTKISASCAALALMTLAG) is a signal peptide. Cysteine 25 is lipidated: N-palmitoyl cysteine. A lipid anchor (S-diacylglycerol cysteine) is attached at cysteine 25.

The protein belongs to the LolB family. As to quaternary structure, monomer.

It localises to the cell outer membrane. Plays a critical role in the incorporation of lipoproteins in the outer membrane after they are released by the LolA protein. The chain is Outer-membrane lipoprotein LolB from Shewanella loihica (strain ATCC BAA-1088 / PV-4).